Reading from the N-terminus, the 386-residue chain is Lycopene beta-cyclase (386 aa).

3–33 serves as a coordination point for NAD(+); sequence DLILVGGGLANGLIAWRLRQRYPQLNLLLIE.

The protein belongs to the lycopene cyclase family. The cofactor is FAD.

It carries out the reaction a carotenoid psi-end group = a carotenoid beta-end derivative. The catalysed reaction is all-trans-lycopene = gamma-carotene. It catalyses the reaction gamma-carotene = all-trans-beta-carotene. It functions in the pathway carotenoid biosynthesis; beta-carotene biosynthesis. Functionally, catalyzes the double cyclization reaction which converts lycopene to beta-carotene. The sequence is that of Lycopene beta-cyclase from Pseudescherichia vulneris (Escherichia vulneris).